Consider the following 369-residue polypeptide: Glycolate oxidase 5 (369 aa).

Positions 1–360 constitute an FMN hydroxy acid dehydrogenase domain; the sequence is MGEITNVTEY…TRNHVITEAD (360 aa). Y25 contacts glyoxylate. FMN contacts are provided by residues 78–80, S107, 128–130, and T156; these read PSA and QLY. Y130 is a binding site for glyoxylate. R165 contacts glyoxylate. FMN contacts are provided by K231 and S253. Glyoxylate-binding residues include H255 and R258. The active-site Proton acceptor is H255. FMN-binding positions include 286 to 290 and 309 to 310; these read DGGVR and GR. Positions 367 to 369 match the Microbody targeting signal motif; the sequence is SRL.

The protein belongs to the FMN-dependent alpha-hydroxy acid dehydrogenase family. As to quaternary structure, homotetramer. FMN serves as cofactor.

Its subcellular location is the peroxisome. It carries out the reaction glycolate + O2 = glyoxylate + H2O2. Its pathway is photosynthesis; photorespiration; glycine from 2-phosphoglycolate: step 2/3. Its function is as follows. Catalyzes the oxidation of glycolate to glyoxylate, with a reduction of O2 to H2O2. Is a key enzyme in photorespiration in green plants. The chain is Glycolate oxidase 5 (GLO5) from Oryza sativa subsp. japonica (Rice).